Consider the following 127-residue polypeptide: Apolipoprotein C-IV (127 aa).

Residues Met1 to Cys27 form the signal peptide.

It belongs to the apolipoprotein C4 family.

The protein resides in the secreted. Functionally, may participate in lipoprotein metabolism. The sequence is that of Apolipoprotein C-IV (APOC4) from Chlorocebus sabaeus (Green monkey).